The chain runs to 247 residues: Adenosylcobinamide-GDP ribazoletransferase (247 aa).

The next 5 membrane-spanning stretches (helical) occupy residues 1 to 21 (MLRL…PFSF), 37 to 57 (LVGL…ALAL), 61 to 81 (VADL…HLDG), 109 to 129 (AVGV…LFAV), and 176 to 196 (VAVA…LPGI).

Belongs to the CobS family. The cofactor is Mg(2+).

It localises to the cell inner membrane. It catalyses the reaction alpha-ribazole + adenosylcob(III)inamide-GDP = adenosylcob(III)alamin + GMP + H(+). The catalysed reaction is alpha-ribazole 5'-phosphate + adenosylcob(III)inamide-GDP = adenosylcob(III)alamin 5'-phosphate + GMP + H(+). It functions in the pathway cofactor biosynthesis; adenosylcobalamin biosynthesis; adenosylcobalamin from cob(II)yrinate a,c-diamide: step 7/7. Joins adenosylcobinamide-GDP and alpha-ribazole to generate adenosylcobalamin (Ado-cobalamin). Also synthesizes adenosylcobalamin 5'-phosphate from adenosylcobinamide-GDP and alpha-ribazole 5'-phosphate. The sequence is that of Adenosylcobinamide-GDP ribazoletransferase from Geotalea daltonii (strain DSM 22248 / JCM 15807 / FRC-32) (Geobacter daltonii).